A 446-amino-acid polypeptide reads, in one-letter code: MSIDTIVAIATPPGRGGVGIVRISGPNAYAIALCLNGNKALQPRLATFCSLYKGNNEVLDQGLVLYFKGPHSFTGEDVIEIQAHGSPVVLDLLIKESIAAGARLARPGEFSERAFLNDKIDLIQAEAIADLIQASSDTAARMALKSLQGDFSKKINQLNEELIYLRMYVEAAIDFPEEEIDFLNDGNVSQLLQRIIGRLEEIRSQANQGVLLREGLSLVIAGRPNAGKSTLINNLAGRDVAIVTEIAGTTRDIMREHILLDDIPLHIIDTAGLRDSDDLVEKEGIKRAWQELKRADCVLLVVDINNPDQQNSLLNELRLTLPNKIPIITVYNKIDTTKLTAKCDEHTVYLSAKTGEGLDELKKVIKQVVGYQPTEGQFLARRRHLQALDEAKALLLTGQSQLTNHKAGELLAEDLRLAHQTLCEITGEFTSDDLLGKIFSSFCIGK.

(6S)-5-formyl-5,6,7,8-tetrahydrofolate is bound by residues Arg22, Glu80, and Lys119. The 156-residue stretch at 215–370 (GLSLVIAGRP…LKKVIKQVVG (156 aa)) folds into the TrmE-type G domain. Asn225 contacts K(+). Residues 225-230 (NAGKST), 244-250 (TEIAGTT), and 269-272 (DTAG) contribute to the GTP site. Ser229 provides a ligand contact to Mg(2+). The K(+) site is built by Thr244, Ile246, and Thr249. Thr250 is a Mg(2+) binding site. Lys446 contributes to the (6S)-5-formyl-5,6,7,8-tetrahydrofolate binding site.

This sequence belongs to the TRAFAC class TrmE-Era-EngA-EngB-Septin-like GTPase superfamily. TrmE GTPase family. In terms of assembly, homodimer. Heterotetramer of two MnmE and two MnmG subunits. K(+) is required as a cofactor.

It is found in the cytoplasm. Functionally, exhibits a very high intrinsic GTPase hydrolysis rate. Involved in the addition of a carboxymethylaminomethyl (cmnm) group at the wobble position (U34) of certain tRNAs, forming tRNA-cmnm(5)s(2)U34. This is tRNA modification GTPase MnmE from Legionella pneumophila (strain Corby).